A 389-amino-acid chain; its full sequence is E3 ubiquitin-protein ligase E3D (389 aa).

At alanine 2 the chain carries N-acetylalanine. The BRAT1-like motif motif lies at 129–159; that stretch reads PLPGDNWGALVDEWCCHPDPFANKPLHPREN. Cysteine 144 serves as a coordination point for Zn(2+). Residues 235 to 257 form an interaction with UBE2C region; the sequence is LPSERNFPIIPRSQFVQSVLAQC. The interval 353-389 is HECT-like; sequence LPSTTCLELLLILSKSNATLPPSLRCMNSFQVAFLKM.

As to quaternary structure, interacts with UBE2C/UbcH10 (E2 ubiquitin-conjugating enzyme). In vitro, interacts with cyclin-B. In terms of processing, ubiquitinated by UBCH10 (E2 ubiquitin-conjugating enzyme).

Its subcellular location is the cytoplasm. It carries out the reaction S-ubiquitinyl-[E2 ubiquitin-conjugating enzyme]-L-cysteine + [acceptor protein]-L-lysine = [E2 ubiquitin-conjugating enzyme]-L-cysteine + N(6)-ubiquitinyl-[acceptor protein]-L-lysine.. Its pathway is protein modification; protein ubiquitination. E3 ubiquitin-protein ligase which accepts ubiquitin from specific E2 ubiquitin-conjugating enzymes, and transfers it to substrates, generally promoting their degradation by the proteasome. Independently of its E3 ubiquitin-protein ligase activity, acts as an inhibitor of CPSF3 endonuclease activity by blocking CPSF3 active site. This Bos taurus (Bovine) protein is E3 ubiquitin-protein ligase E3D (UBE3D).